Here is a 317-residue protein sequence, read N- to C-terminus: Sulfate adenylyltransferase subunit 2 (317 aa).

Positions 1–10 (MSNAVHETDS) are enriched in basic and acidic residues. Disordered regions lie at residues 1–21 (MSNA…PPLD) and 298–317 (RAID…EGYF).

This sequence belongs to the PAPS reductase family. CysD subfamily. In terms of assembly, heterodimer composed of CysD, the smaller subunit, and CysN.

The catalysed reaction is sulfate + ATP + H(+) = adenosine 5'-phosphosulfate + diphosphate. It functions in the pathway sulfur metabolism; hydrogen sulfide biosynthesis; sulfite from sulfate: step 1/3. Functionally, with CysN forms the ATP sulfurylase (ATPS) that catalyzes the adenylation of sulfate producing adenosine 5'-phosphosulfate (APS) and diphosphate, the first enzymatic step in sulfur assimilation pathway. APS synthesis involves the formation of a high-energy phosphoric-sulfuric acid anhydride bond driven by GTP hydrolysis by CysN coupled to ATP hydrolysis by CysD. This is Sulfate adenylyltransferase subunit 2 from Agrobacterium fabrum (strain C58 / ATCC 33970) (Agrobacterium tumefaciens (strain C58)).